The chain runs to 190 residues: MAKANEIKRGSAVSYNGKLLLVKDIDIQAPSARGASTLYKMRFTDIRTGQKVEERFKGDDILDTISLTRRSVNFSYIDGDEYVFMDDEDFTPYHFKKEQIEEELLFIPEGGLPGMQVLTIEGQVIALELPQTVDMVIEETAPGIKGASASARTKPAKMSTGLTVQVPEYISSGERIRIHIAERRYMGRCD.

Belongs to the elongation factor P family.

The protein is Elongation factor P-like protein of Photorhabdus laumondii subsp. laumondii (strain DSM 15139 / CIP 105565 / TT01) (Photorhabdus luminescens subsp. laumondii).